A 623-amino-acid chain; its full sequence is Glutamyl-tRNA(Gln) amidotransferase subunit E (623 aa).

Belongs to the GatB/GatE family. GatE subfamily. As to quaternary structure, heterodimer of GatD and GatE.

The enzyme catalyses L-glutamyl-tRNA(Gln) + L-glutamine + ATP + H2O = L-glutaminyl-tRNA(Gln) + L-glutamate + ADP + phosphate + H(+). Its function is as follows. Allows the formation of correctly charged Gln-tRNA(Gln) through the transamidation of misacylated Glu-tRNA(Gln) in organisms which lack glutaminyl-tRNA synthetase. The reaction takes place in the presence of glutamine and ATP through an activated gamma-phospho-Glu-tRNA(Gln). The GatDE system is specific for glutamate and does not act on aspartate. This chain is Glutamyl-tRNA(Gln) amidotransferase subunit E, found in Haloarcula marismortui (strain ATCC 43049 / DSM 3752 / JCM 8966 / VKM B-1809) (Halobacterium marismortui).